A 394-amino-acid polypeptide reads, in one-letter code: Elongation factor Tu (394 aa).

The 195-residue stretch at 10–204 folds into the tr-type G domain; the sequence is KPHINIGTIG…AVDDNIPTPE (195 aa). The interval 19-26 is G1; that stretch reads GHVDHGKT. A GTP-binding site is contributed by 19-26; sequence GHVDHGKT. Thr-26 is a binding site for Mg(2+). A G2 region spans residues 60-64; that stretch reads GITIN. Positions 81–84 are G3; sequence DCPG. GTP is bound by residues 81 to 85 and 136 to 139; these read DCPGH and NKID. The tract at residues 136–139 is G4; the sequence is NKID. The interval 174–176 is G5; the sequence is SAL.

The protein belongs to the TRAFAC class translation factor GTPase superfamily. Classic translation factor GTPase family. EF-Tu/EF-1A subfamily. In terms of assembly, monomer.

It localises to the cytoplasm. It carries out the reaction GTP + H2O = GDP + phosphate + H(+). In terms of biological role, GTP hydrolase that promotes the GTP-dependent binding of aminoacyl-tRNA to the A-site of ribosomes during protein biosynthesis. This chain is Elongation factor Tu, found in Chlamydia abortus (strain DSM 27085 / S26/3) (Chlamydophila abortus).